The chain runs to 307 residues: Zygote arrest protein 2.L (307 aa).

The segment at 138–200 (LPQGGRLPKK…EEPGNEEQTK (63 aa)) is disordered. The segment covering 156–186 (LKERAPSPEDKEREKVSEKEPDTKDELEKRP) has biased composition (basic and acidic residues). The 3CxxC-type zinc-finger motif lies at 208–293 (QKYGYFHCKD…QELCGRCKNK (86 aa)).

The protein belongs to the ZAR1 family. Expressed in oocytes.

It is found in the cytoplasm. It localises to the cytoplasmic ribonucleoprotein granule. In terms of biological role, mRNA-binding protein required for maternal mRNA storage, translation and degradation during oocyte maturation. Probably promotes formation of some phase-separated membraneless compartment that stores maternal mRNAs in oocytes: acts by undergoing liquid-liquid phase separation upon binding to maternal mRNAs. Binds to the 3'-UTR of maternal mRNAs, inhibiting their translation. This Xenopus laevis (African clawed frog) protein is Zygote arrest protein 2.L (zar2.L).